The following is a 1776-amino-acid chain: TOG array regulator of axonemal microtubules protein 1 (1776 aa).

TOG stretches follow at residues glutamate 94–glutamate 311 and proline 351–serine 595. 8 HEAT repeats span residues alanine 175–glycine 212, valine 214–leucine 246, leucine 250–glutamine 288, asparagine 344–proline 383, alanine 389–glutamate 426, glutamine 430–valine 465, glycine 466–glutamate 503, and phenylalanine 505–serine 542. 4 disordered regions span residues lysine 655–serine 676, isoleucine 817–asparagine 921, histidine 970–aspartate 1000, and threonine 1062–arginine 1084. 3 stretches are compositionally biased toward polar residues: residues proline 826–leucine 836, aspartate 845–proline 855, and leucine 871–glutamine 892. The span at serine 988–aspartate 1000 shows a compositional bias: low complexity. The TOG 3 stretch occupies residues aspartate 1259 to arginine 1481. HEAT repeat units follow at residues threonine 1297–lysine 1334 and glutamine 1338–proline 1375. The interval alanine 1493 to alanine 1536 is disordered. A compositionally biased stretch (low complexity) spans arginine 1509–serine 1520. Basic and acidic residues predominate over residues serine 1521 to arginine 1533. The TOG 4 stretch occupies residues serine 1540–leucine 1776. HEAT repeat units lie at residues leucine 1541 to glutamate 1578, glycine 1582 to aspartate 1619, and proline 1623 to asparagine 1661.

This sequence belongs to the Crescerin family. As to quaternary structure, interacts with ARMC9. Interacts with CCDC66, CEP104 and CSPP1.

The protein localises to the cell projection. The protein resides in the cilium. It localises to the cytoplasm. Its subcellular location is the cytoskeleton. It is found in the cilium axoneme. Its function is as follows. Involved in ciliogenesis. It is required for appropriate acetylation and polyglutamylation of ciliary microtubules, and regulation of cilium length. Interacts with microtubules and promotes microtubule polymerization via its HEAT repeat domains, especially those in TOG region 2 and 4. This chain is TOG array regulator of axonemal microtubules protein 1 (Togaram1), found in Mus musculus (Mouse).